Consider the following 169-residue polypeptide: MLNILKNNNNKIQGRLSIWLIKHNLKHRPLGFDYQGIETLQIRSEDWPSLAVALYVYGFNYLRSQCAYDVEPGGLLASVYHFTKITDNADQPEEICIKIFILRKNPKIPSIFWVWKSADFQERESYDMFGIFYENHPCLKRILMPDSWLGWPLRKDYIVPNFYELQDAY.

This sequence belongs to the complex I 30 kDa subunit family. As to quaternary structure, NDH is composed of at least 16 different subunits, 5 of which are encoded in the nucleus.

It localises to the plastid. The protein localises to the chloroplast thylakoid membrane. It carries out the reaction a plastoquinone + NADH + (n+1) H(+)(in) = a plastoquinol + NAD(+) + n H(+)(out). It catalyses the reaction a plastoquinone + NADPH + (n+1) H(+)(in) = a plastoquinol + NADP(+) + n H(+)(out). NDH shuttles electrons from NAD(P)H:plastoquinone, via FMN and iron-sulfur (Fe-S) centers, to quinones in the photosynthetic chain and possibly in a chloroplast respiratory chain. The immediate electron acceptor for the enzyme in this species is believed to be plastoquinone. Couples the redox reaction to proton translocation, and thus conserves the redox energy in a proton gradient. The protein is NAD(P)H-quinone oxidoreductase subunit J, chloroplastic of Marchantia polymorpha (Common liverwort).